The primary structure comprises 310 residues: Putative methyltransferase mtx subunit H (310 aa).

It belongs to the MtrH family. May be part of a complex composed of 3 subunits; MtxA, MtxH and MtxX.

The polypeptide is Putative methyltransferase mtx subunit H (mtxH) (Methanosarcina barkeri (strain Fusaro / DSM 804)).